Here is a 570-residue protein sequence, read N- to C-terminus: MSYKMSRAAYANMFGPTVGDKVRLADTELFIEVEKDFTTYGEEVKFGGGKVIRDGMGQSQVSREGGAVDTVITNALIVDHWGIVKADIGLKDGRIAAIGKAGNPDTQPGVNIIVGPGTEAIAGEGKIVTAGGMDSHIHFICPQQIEEALMSGLTCMLGGGTGPAHGTLATTCTPGPWHIARMIEAADAFPMNLAFAGKGNASLPGALVEMVLGGATSLKLHEDWGTTPGAIDCCLSVADEYDVQVMIHTDTLNESGFVEDTIAAIKGRTIHAFHTEGAGGGHAPDIIKICGQPNVIPSSTNPTRPYTQNTLAEHLDMLMVCHHLSPSIPEDIAFAESRIRKETIAAEDILHDIGAFSIISSDSQAMGRVGEVAIRTWQTADKMKRQRGRLKEETGDNDNFRVRRYVAKYTINPAIAHGLSHEIGSLEVGKRADLVIWNPAFFGVKPDMVLLGGTIAAAPMGDPNASIPTPQPVHYRPMFGAYGRSRTNSSVTFVSQASLDAGLAGRLGVAKELVAVQNTRGGIGKASMIHNSLTPHIEVDPETYEVRADGVLLTCEPATVLPMAQRYFLF.

One can recognise a Urease domain in the interval 131–570; it reads GGMDSHIHFI…LPMAQRYFLF (440 aa). 3 residues coordinate Ni(2+): histidine 136, histidine 138, and lysine 219. Lysine 219 is modified (N6-carboxylysine). Histidine 221 provides a ligand contact to substrate. The Ni(2+) site is built by histidine 248 and histidine 274. Histidine 322 (proton donor) is an active-site residue. Aspartate 362 provides a ligand contact to Ni(2+).

Belongs to the metallo-dependent hydrolases superfamily. Urease alpha subunit family. As to quaternary structure, heterotrimer of UreA (gamma), UreB (beta) and UreC (alpha) subunits. Three heterotrimers associate to form the active enzyme. Requires Ni cation as cofactor. Post-translationally, carboxylation allows a single lysine to coordinate two nickel ions.

It localises to the cytoplasm. It catalyses the reaction urea + 2 H2O + H(+) = hydrogencarbonate + 2 NH4(+). It functions in the pathway nitrogen metabolism; urea degradation; CO(2) and NH(3) from urea (urease route): step 1/1. The polypeptide is Urease subunit alpha (Sinorhizobium fredii (strain NBRC 101917 / NGR234)).